The sequence spans 123 residues: Translation initiation factor 1A (123 aa).

Over residues 1 to 11 (MSPDKTEDEDK) the composition is skewed to acidic residues. Residues 1–26 (MSPDKTEDEDKDVNVDQDQFNEEEES) form a disordered region. In terms of domain architecture, S1-like spans 28–102 (GRVILPNKKK…EKADVVYRYT (75 aa)).

Belongs to the eIF-1A family.

Its function is as follows. Seems to be required for maximal rate of protein biosynthesis. Enhances ribosome dissociation into subunits and stabilizes the binding of the initiator Met-tRNA(I) to 40 S ribosomal subunits. This Thermoplasma volcanium (strain ATCC 51530 / DSM 4299 / JCM 9571 / NBRC 15438 / GSS1) protein is Translation initiation factor 1A (eIF1A).